The sequence spans 379 residues: Cytochrome b (379 aa).

A run of 4 helical transmembrane segments spans residues 33 to 53 (FGSL…FLAM), 77 to 98 (WLIR…FIHV), 113 to 133 (WNIG…GYVL), and 178 to 198 (FFAF…VHLL). H83 and H97 together coordinate heme b. The heme b site is built by H182 and H196. A ubiquinone is bound at residue H201. 4 consecutive transmembrane segments (helical) span residues 226 to 246 (IKDL…TLFF), 288 to 308 (LGGV…PLLN), 320 to 340 (VTQV…WIGG), and 347 to 367 (FTMI…ILIP).

The protein belongs to the cytochrome b family. The cytochrome bc1 complex contains 11 subunits: 3 respiratory subunits (MT-CYB, CYC1 and UQCRFS1), 2 core proteins (UQCRC1 and UQCRC2) and 6 low-molecular weight proteins (UQCRH/QCR6, UQCRB/QCR7, UQCRQ/QCR8, UQCR10/QCR9, UQCR11/QCR10 and a cleavage product of UQCRFS1). This cytochrome bc1 complex then forms a dimer. Heme b is required as a cofactor.

Its subcellular location is the mitochondrion inner membrane. Functionally, component of the ubiquinol-cytochrome c reductase complex (complex III or cytochrome b-c1 complex) that is part of the mitochondrial respiratory chain. The b-c1 complex mediates electron transfer from ubiquinol to cytochrome c. Contributes to the generation of a proton gradient across the mitochondrial membrane that is then used for ATP synthesis. The protein is Cytochrome b (MT-CYB) of Akodon subfuscus (Puno grass mouse).